The following is a 796-amino-acid chain: Potassium transporter 10 (796 aa).

The segment at 1–30 (MAGRVESSIGGGEIDEEGDERGSMWDLDQS) is disordered. The Cytoplasmic portion of the chain corresponds to 1–58 (MAGRVESSIGGGEIDEEGDERGSMWDLDQSLDQPMDEEAGRLRNMYREKKFSAFLLLQ). Residues 59–79 (LSFQSLGVVYGDLGTSPLYVF) traverse the membrane as a helical segment. The Extracellular segment spans residues 80–95 (YNTFPRGIKDPEDIIG). Residues 96–116 (ALSLIIYSLTLIPLLKYVFVV) form a helical membrane-spanning segment. Residues 117 to 184 (CKANDNGQGG…ENGTSRKNAL (68 aa)) are Cytoplasmic-facing. The helical transmembrane segment at 185–205 (LILVLVGTCMVIGDGILTPAI) threads the bilayer. Residues 206-217 (SVLSAAGGLRVN) lie on the Extracellular side of the membrane. The helical transmembrane segment at 218-238 (LPHINNGIVVVVAVVILVSLF) threads the bilayer. The Cytoplasmic segment spans residues 239 to 248 (SVQHYGTDRV). A helical membrane pass occupies residues 249–269 (GWLFAPIVFLWFLFIASIGMF). Over 270-298 (NIWKHDPSVLKAFSPVYIFRYFKRGGQDR) the chain is Extracellular. Residues 299–319 (WTSLGGIMLSITGIEALFADL) form a helical membrane-spanning segment. The Cytoplasmic segment spans residues 320–321 (SH). Residues 322-342 (FPVSAVQFAFTVIVFPCLLLA) form a helical membrane-spanning segment. Residues 343 to 368 (YSGQAAYLRKYPHHVEDAFYQSIPKR) are Extracellular-facing. The chain crosses the membrane as a helical span at residues 369–389 (VYWPMFIIATAAAIVASQATI). Residues 390–420 (SATFSLIKQALAHGCFPRVKVVHTSRKFLGQ) lie on the Cytoplasmic side of the membrane. The helical transmembrane segment at 421-441 (IYVPDINWILMILCIAVTAGF) threads the bilayer. The Extracellular portion of the chain corresponds to 442–453 (KNQNQIGNAYGT). A helical membrane pass occupies residues 454 to 474 (AVVIVMLVTTLLMMLIMILVW). Residues 475-480 (RCHWVL) lie on the Cytoplasmic side of the membrane. The helical transmembrane segment at 481 to 501 (VLLFTLLSLVVECTYFSAVLF) threads the bilayer. Over 502–505 (KVNQ) the chain is Extracellular. The chain crosses the membrane as a helical span at residues 506–526 (GGWVPLVIAAAFLVIMYVWHY). Residues 527 to 796 (GTLKRYEFEM…LLNVGQIFYV (270 aa)) lie on the Cytoplasmic side of the membrane.

Belongs to the HAK/KUP transporter (TC 2.A.72.3) family.

Its subcellular location is the cell membrane. Functionally, putative potassium transporter. The protein is Potassium transporter 10 (POT10) of Arabidopsis thaliana (Mouse-ear cress).